Consider the following 127-residue polypeptide: MLQLLLAVFIGGGTGSVARWMLSMRFNPLHQAIPIGTLTANLLGAFIIGMGFAWFNRMTHIDPMWKVLITTGFCGGLTTFSTFSAEVVFLLQEGRFGWALLNVLINLLGSFAMTALAFWLFSAAAAR.

4 consecutive transmembrane segments (helical) span residues 4-24, 35-55, 71-91, and 103-123; these read LLLA…MLSM, IGTL…FAWF, TGFC…VFLL, and VLIN…LFSA. Residues Gly75 and Thr78 each coordinate Na(+).

This sequence belongs to the fluoride channel Fluc/FEX (TC 1.A.43) family.

It localises to the cell inner membrane. It carries out the reaction fluoride(in) = fluoride(out). With respect to regulation, na(+) is not transported, but it plays an essential structural role and its presence is essential for fluoride channel function. In terms of biological role, fluoride-specific ion channel. Important for reducing fluoride concentration in the cell, thus reducing its toxicity. This is Fluoride-specific ion channel FluC from Salmonella agona (strain SL483).